We begin with the raw amino-acid sequence, 490 residues long: Cytochrome P450 2C26 (490 aa).

Cys435 is a binding site for heme.

This sequence belongs to the cytochrome P450 family. Requires heme as cofactor.

It is found in the endoplasmic reticulum membrane. Its subcellular location is the microsome membrane. It catalyses the reaction an organic molecule + reduced [NADPH--hemoprotein reductase] + O2 = an alcohol + oxidized [NADPH--hemoprotein reductase] + H2O + H(+). Catalyzes the hydroxylation of tolbutamide and the N-demethylation of aminopyrine and benzphetamine. This Mesocricetus auratus (Golden hamster) protein is Cytochrome P450 2C26 (CYP2C26).